A 551-amino-acid chain; its full sequence is Adenylosuccinate synthetase (551 aa).

Residues 131 to 137 and 159 to 161 each bind GTP; these read GDEGKGK and GHT. The Proton acceptor role is filled by Asp132. Mg(2+) contacts are provided by Asp132 and Gly159. IMP contacts are provided by residues 132–135, 157–160, Thr248, Arg262, Asn339, Thr354, and Arg418; these read DEGK and NAGH. His160 acts as the Proton donor in catalysis. Substrate is bound at residue 414–420; that stretch reads TTTGRAR. Residues Arg420, 446–448, and 528–530 contribute to the GTP site; these read KLD and GVG.

Belongs to the adenylosuccinate synthetase family. Homodimer. The cofactor is Mg(2+).

It is found in the cytoplasm. The enzyme catalyses IMP + L-aspartate + GTP = N(6)-(1,2-dicarboxyethyl)-AMP + GDP + phosphate + 2 H(+). It participates in purine metabolism; AMP biosynthesis via de novo pathway; AMP from IMP: step 1/2. In terms of biological role, plays an important role in the de novo pathway and in the salvage pathway of purine nucleotide biosynthesis. Catalyzes the first committed step in the biosynthesis of AMP from IMP. The sequence is that of Adenylosuccinate synthetase from Phytophthora infestans (strain T30-4) (Potato late blight agent).